The chain runs to 323 residues: 1-aminocyclopropane-1-carboxylate oxidase 4 (323 aa).

Methionine 1 carries the post-translational modification N-acetylmethionine. The Fe2OG dioxygenase domain occupies 153 to 254 (PTFGTKVSNY…RMSIASFYNP (102 aa)). Positions 177, 179, and 234 each coordinate Fe cation. Arginine 245 is a binding site for 2-oxoglutarate.

It belongs to the iron/ascorbate-dependent oxidoreductase family. The cofactor is Fe cation. Expressed in vegetative tissues. Expressed constitutively at a low level in leaves and blades.

The enzyme catalyses 1-aminocyclopropane-1-carboxylate + L-ascorbate + O2 = ethene + L-dehydroascorbate + hydrogen cyanide + CO2 + 2 H2O. The protein operates within alkene biosynthesis; ethylene biosynthesis via S-adenosyl-L-methionine; ethylene from S-adenosyl-L-methionine: step 2/2. Functionally, enzyme involved in the ethylene biosynthesis. May promote stem elongation by maximizing the extensibility cells, possibly by activating ethylene biosynthesis, in response to very-long-chain fatty acids (VLCFAs C20:0 to C30:0). In Arabidopsis thaliana (Mouse-ear cress), this protein is 1-aminocyclopropane-1-carboxylate oxidase 4 (ACO4).